The following is a 416-amino-acid chain: Choline/ethanolaminephosphotransferase 1 (416 aa).

Positions 1-20 are disordered; sequence MSGHRSTRKRCGDSHPESPV. A Phosphoserine modification is found at serine 18. A Phosphothreonine modification is found at threonine 40. CDP-choline is bound at residue asparagine 86. Transmembrane regions (helical) follow at residues 89–108 and 116–133; these read TIIG…FYCP and LWAY…QSLD. Aspartate 133 is a Mg(2+) binding site. N-linked (GlcNAc...) asparagine glycosylation is present at asparagine 144. A CDP-choline-binding site is contributed by glutamate 151. Aspartate 154 contributes to the Mg(2+) binding site. Histidine 155 (proton acceptor) is an active-site residue. A run of 8 helical transmembrane segments spans residues 156 to 176, 180 to 199, 210 to 230, 246 to 267, 286 to 306, 315 to 334, 349 to 363, and 368 to 388; these read GCDS…VQLG, DWMF…AHWQ, IIDV…AVIG, MKLL…NYFR, VLSP…IYKK, HPCL…TNKL, TAFI…DQYF, and DEYI…IRYC. A Mg(2+)-binding site is contributed by aspartate 158.

It belongs to the CDP-alcohol phosphatidyltransferase class-I family. Homodimer. Mg(2+) serves as cofactor. The cofactor is Mn(2+).

The protein localises to the endoplasmic reticulum membrane. It is found in the nucleus membrane. It carries out the reaction CDP-ethanolamine + a 1,2-diacyl-sn-glycerol = a 1,2-diacyl-sn-glycero-3-phosphoethanolamine + CMP + H(+). The enzyme catalyses CDP-choline + a 1,2-diacyl-sn-glycerol = a 1,2-diacyl-sn-glycero-3-phosphocholine + CMP + H(+). The catalysed reaction is 1-O-alkyl-2-acyl-sn-glycerol + CDP-choline = a 1-O-alkyl-2-acyl-sn-glycero-3-phosphocholine + CMP + H(+). It catalyses the reaction a 1-O-(1Z-alkenyl)-2-acyl-sn-glycerol + CDP-choline = a 1-O-(1Z-alkenyl)-2-acyl-sn-glycero-3-phosphocholine + CMP + H(+). It carries out the reaction 1,2-dioctanoyl-sn-glycerol + CDP-choline = 1,2-dioctanoyl-sn-glycero-3-phosphocholine + CMP + H(+). The enzyme catalyses 1,2-didecanoyl-sn-glycerol + CDP-choline = 1,2-didecanoyl-sn-glycero-3-phosphocholine + CMP + H(+). The catalysed reaction is CDP-choline + 1,2-di-(9Z-octadecenoyl)-sn-glycerol = 1,2-di-(9Z-octadecenoyl)-sn-glycero-3-phosphocholine + CMP + H(+). It catalyses the reaction 1-hexadecanoyl-2-(9Z-octadecenoyl)-sn-glycerol + CDP-choline = 1-hexadecanoyl-2-(9Z-octadecenoyl)-sn-glycero-3-phosphocholine + CMP + H(+). It carries out the reaction CDP-ethanolamine + 1,2-di-(9Z-octadecenoyl)-sn-glycerol = 1,2-di-(9Z-octadecenoyl)-sn-glycero-3-phosphoethanolamine + CMP + H(+). The enzyme catalyses 1-hexadecanoyl-2-(9Z-octadecenoyl)-sn-glycerol + CDP-ethanolamine = 1-hexadecanoyl-2-(9Z-octadecenoyl)-sn-glycero-3-phosphoethanolamine + CMP + H(+). The catalysed reaction is 1-hexadecanoyl-2-(4Z,7Z,10Z,13Z,16Z,19Z-docosahexaenoyl)-sn-glycerol + CDP-choline = 1-hexadecanoyl-2-(4Z,7Z,10Z,13Z,16Z,19Z-docosahexaenoyl)-sn-glycero-3-phosphocholine + CMP + H(+). It catalyses the reaction 1,2-di-(9Z-hexadecenoyl)-sn-glycerol + CDP-choline = 1,2-di-(9Z-hexadecenoyl)-sn-glycero-3-phosphocholine + CMP + H(+). It carries out the reaction 1,2-di-(9Z-hexadecenoyl)-sn-glycerol + CDP-ethanolamine = 1,2-di-(9Z-hexadecenoyl)-sn-glycero-3-phosphoethanolamine + CMP + H(+). The enzyme catalyses 1-O-hexadecyl-2-acetyl-sn-glycerol + CDP-choline = 1-O-hexadecyl-2-acetyl-sn-glycero-3-phosphocholine + CMP + H(+). The catalysed reaction is 1-O-hexadecyl-2-(5Z,8Z,11Z,14Z-eicosatetraenoyl)-sn-glycerol + CDP-choline = 1-O-hexadecyl-2-(5Z,8Z,11Z,14Z)-eicosatetraenoyl-sn-glycero-3-phosphocholine + CMP + H(+). Its pathway is phospholipid metabolism; phosphatidylethanolamine biosynthesis; phosphatidylethanolamine from ethanolamine: step 3/3. It functions in the pathway phospholipid metabolism; phosphatidylcholine biosynthesis; phosphatidylcholine from phosphocholine: step 2/2. In terms of biological role, catalyzes both phosphatidylcholine and phosphatidylethanolamine biosynthesis from CDP-choline and CDP-ethanolamine, respectively. Involved in protein-dependent process of phospholipid transport to distribute phosphatidyl choline to the lumenal surface. Has a higher cholinephosphotransferase activity than ethanolaminephosphotransferase activity. This Mus musculus (Mouse) protein is Choline/ethanolaminephosphotransferase 1.